We begin with the raw amino-acid sequence, 289 residues long: BTB/POZ domain-containing protein KCTD7 (289 aa).

The segment at 1–40 (MVVVTGREPDSRRPDGAMSSSDAEDDFLEPATPTATQAGH) is disordered. Residues 53–141 (VPLNIGGAHF…YAIGPLLEQL (89 aa)) enclose the BTB domain.

Interacts with CUL3.

The protein resides in the cell membrane. Its subcellular location is the cytoplasm. It localises to the cytosol. May be involved in the control of excitability of cortical neurons. This is BTB/POZ domain-containing protein KCTD7 (KCTD7) from Bos taurus (Bovine).